A 405-amino-acid chain; its full sequence is Methylamine dehydrogenase heavy chain (405 aa).

The N-terminal stretch at 1-36 is a signal peptide; sequence MTTFDHPSMIRQPKPTGLAGGLVLAALMLSSSLALA.

Belongs to the aromatic amine dehydrogenase heavy chain family. As to quaternary structure, tetramer of two light and two heavy chains.

The protein localises to the periplasm. It carries out the reaction 2 oxidized [amicyanin] + methylamine + H2O = 2 reduced [amicyanin] + formaldehyde + NH4(+) + 2 H(+). In terms of biological role, methylamine dehydrogenase carries out the oxidation of methylamine. Electrons are passed from methylamine dehydrogenase to amicyanin. The polypeptide is Methylamine dehydrogenase heavy chain (mauB) (Methylophilus methylotrophus (Bacterium W3A1)).